The sequence spans 439 residues: Glucan 1,3-beta-glucosidase (439 aa).

The signal sequence occupies residues 1–18 (MLLSLLFLLSTFAFGALT). Glu227 functions as the Proton donor in the catalytic mechanism. 2 disulfide bridges follow: Cys311/Cys437 and Cys336/Cys366. Glu328 serves as the catalytic Nucleophile.

Belongs to the glycosyl hydrolase 5 (cellulase A) family.

Its subcellular location is the secreted. The catalysed reaction is Successive hydrolysis of beta-D-glucose units from the non-reducing ends of (1-&gt;3)-beta-D-glucans, releasing alpha-glucose.. In terms of biological role, beta-glucanases participate in the metabolism of beta-glucan, the main structural component of the cell wall. It could also function biosynthetically as a transglycosylase. This chain is Glucan 1,3-beta-glucosidase (EXG1), found in Lachancea kluyveri (strain ATCC 58438 / CBS 3082 / BCRC 21498 / NBRC 1685 / JCM 7257 / NCYC 543 / NRRL Y-12651) (Yeast).